The sequence spans 383 residues: Protein RecA (383 aa).

ATP is bound at residue 79–86 (GPESSGKT). Positions 347–369 (IEEDNTEEKQSSKEKETDEKADK) are disordered. Positions 353 to 369 (EEKQSSKEKETDEKADK) are enriched in basic and acidic residues.

It belongs to the RecA family.

The protein localises to the cytoplasm. In terms of biological role, can catalyze the hydrolysis of ATP in the presence of single-stranded DNA, the ATP-dependent uptake of single-stranded DNA by duplex DNA, and the ATP-dependent hybridization of homologous single-stranded DNAs. It interacts with LexA causing its activation and leading to its autocatalytic cleavage. This chain is Protein RecA, found in Streptococcus mutans serotype c (strain ATCC 700610 / UA159).